The following is a 254-amino-acid chain: NH(3)-dependent NAD(+) synthetase (254 aa).

Residue 29–36 participates in ATP binding; sequence GLSGGIDS. Residue Asp-35 coordinates Mg(2+). Arg-115 contributes to the deamido-NAD(+) binding site. Thr-135 provides a ligand contact to ATP. Glu-140 contributes to the Mg(2+) binding site. Deamido-NAD(+)-binding residues include Lys-148 and Asp-155. ATP-binding residues include Lys-164 and Ser-186. 245–246 is a deamido-NAD(+) binding site; sequence HK.

This sequence belongs to the NAD synthetase family. Homodimer.

The catalysed reaction is deamido-NAD(+) + NH4(+) + ATP = AMP + diphosphate + NAD(+) + H(+). It participates in cofactor biosynthesis; NAD(+) biosynthesis; NAD(+) from deamido-NAD(+) (ammonia route): step 1/1. Catalyzes the ATP-dependent amidation of deamido-NAD to form NAD. Uses ammonia as a nitrogen source. This Methanococcus aeolicus (strain ATCC BAA-1280 / DSM 17508 / OCM 812 / Nankai-3) protein is NH(3)-dependent NAD(+) synthetase.